Consider the following 416-residue polypeptide: MDIMRSVVGMVVLLAIAFLLSVNKKSISLRTVGAALLLQIAIGGIMLYFPPGKWAVEQAALGVHKVMSYSDAGSAFIFGSLVGPKMDVLFDGAGFIFAFRVLPAIIFVTALISLLYYIGVMGLLIRILGSIFQKALNISKIESFVAVTTIFLGQNEIPAIVKPFIDRMNRNELFTAICSGMASIAGSMMIGYAGMGVPIDYLLAASLMAIPGGILFARILSPATEPSQVTFENLSFSETPPKSFIEAAASGAMTGLKIAAGVATVVMAFVAIIALINGIIGGIGGWFGFANASLESIFGYVLAPLAWIMGVDWSDANLAGSLIGQKLAINEFVAYLSFSPYLQTGGTLEVKTIAIISFALCGFANFGSIGVVVGAFSAISPKRAPEIAQLGLRALAAATLSNLMSATIAGFFIGLA.

At 1-2 the chain is on the periplasmic side; sequence MD. Residues 3–23 form a helical membrane-spanning segment; it reads IMRSVVGMVVLLAIAFLLSVN. The Cytoplasmic segment spans residues 24–31; the sequence is KKSISLRT. The helical transmembrane segment at 32-52 threads the bilayer; sequence VGAALLLQIAIGGIMLYFPPG. Residues 53–104 lie on the Periplasmic side of the membrane; the sequence is KWAVEQAALGVHKVMSYSDAGSAFIFGSLVGPKMDVLFDGAGFIFAFRVLPA. The chain crosses the membrane as a helical span at residues 105–125; the sequence is IIFVTALISLLYYIGVMGLLI. Topologically, residues 126 to 172 are cytoplasmic; that stretch reads RILGSIFQKALNISKIESFVAVTTIFLGQNEIPAIVKPFIDRMNRNE. Residues 173–193 form a helical membrane-spanning segment; the sequence is LFTAICSGMASIAGSMMIGYA. Residues 194-196 lie on the Periplasmic side of the membrane; that stretch reads GMG. A helical transmembrane segment spans residues 197–217; that stretch reads VPIDYLLAASLMAIPGGILFA. The Cytoplasmic segment spans residues 218–268; it reads RILSPATEPSQVTFENLSFSETPPKSFIEAAASGAMTGLKIAAGVATVVMA. The chain crosses the membrane as a helical span at residues 269–289; sequence FVAIIALINGIIGGIGGWFGF. At 290–352 the chain is on the periplasmic side; it reads ANASLESIFG…QTGGTLEVKT (63 aa). Residues 353–373 traverse the membrane as a helical segment; the sequence is IAIISFALCGFANFGSIGVVV. Residues 374 to 394 are Cytoplasmic-facing; the sequence is GAFSAISPKRAPEIAQLGLRA. Residues 395–415 traverse the membrane as a helical segment; it reads LAAATLSNLMSATIAGFFIGL. A topological domain (periplasmic) is located at residue Ala-416.

The protein belongs to the concentrative nucleoside transporter (CNT) (TC 2.A.41) family.

Its subcellular location is the cell inner membrane. In terms of biological role, could be involved in pseudouridine transport. This chain is Putative pseudouridine transporter (psuT), found in Escherichia coli (strain K12).